The chain runs to 437 residues: GTPase Obg (437 aa).

The Obg domain occupies 2–160; that stretch reads SLFLDTARIE…KILLLELRVL (159 aa). Residues 161–338 form the OBG-type G domain; the sequence is ADVGLVGFPS…LLARTSELLA (178 aa). GTP contacts are provided by residues 167–174, 192–196, 214–217, 284–287, and 319–321; these read GFPSVGKS, FTTIT, DMPG, NKMD, and SGL. Residues Ser174 and Thr194 each contribute to the Mg(2+) site. Residues 359 to 437 enclose the OCT domain; the sequence is GFEEEEKPFK…IQKFEFEFVD (79 aa).

It belongs to the TRAFAC class OBG-HflX-like GTPase superfamily. OBG GTPase family. As to quaternary structure, monomer. Mg(2+) serves as cofactor.

Its subcellular location is the cytoplasm. An essential GTPase which binds GTP, GDP and possibly (p)ppGpp with moderate affinity, with high nucleotide exchange rates and a fairly low GTP hydrolysis rate. Plays a role in control of the cell cycle, stress response, ribosome biogenesis and in those bacteria that undergo differentiation, in morphogenesis control. The polypeptide is GTPase Obg (Lactococcus lactis subsp. lactis (strain IL1403) (Streptococcus lactis)).